The sequence spans 494 residues: Guanosine-5'-triphosphate,3'-diphosphate pyrophosphatase (494 aa).

This sequence belongs to the GppA/Ppx family. GppA subfamily.

The catalysed reaction is guanosine 3'-diphosphate 5'-triphosphate + H2O = guanosine 3',5'-bis(diphosphate) + phosphate + H(+). Its pathway is purine metabolism; ppGpp biosynthesis; ppGpp from GTP: step 2/2. In terms of biological role, catalyzes the conversion of pppGpp to ppGpp. Guanosine pentaphosphate (pppGpp) is a cytoplasmic signaling molecule which together with ppGpp controls the 'stringent response', an adaptive process that allows bacteria to respond to amino acid starvation, resulting in the coordinated regulation of numerous cellular activities. The polypeptide is Guanosine-5'-triphosphate,3'-diphosphate pyrophosphatase (Escherichia coli (strain 55989 / EAEC)).